Reading from the N-terminus, the 451-residue chain is UPF0761 membrane protein Hhal_0704 (451 aa).

A run of 6 helical transmembrane segments spans residues 66-86 (LLAI…FPVF), 122-142 (ELTA…LNTI), 162-182 (FMVY…SVAS), 204-224 (LLNL…YSLV), 228-248 (SVPV…FELA), and 268-288 (ALAA…VILI).

It belongs to the UPF0761 family.

The protein localises to the cell inner membrane. The sequence is that of UPF0761 membrane protein Hhal_0704 from Halorhodospira halophila (strain DSM 244 / SL1) (Ectothiorhodospira halophila (strain DSM 244 / SL1)).